The sequence spans 229 residues: Probable transmembrane reductase CYB561D1 (229 aa).

Over methionine 1–arginine 24 the chain is Cytoplasmic. A Cytochrome b561 domain is found at leucine 22–arginine 224. Residues glycine 25–serine 45 form a helical membrane-spanning segment. The Lumenal portion of the chain corresponds to arginine 46 to serine 53. The chain crosses the membrane as a helical span at residues tryptophan 54–phenylalanine 74. Histidine 55 is a heme b binding site. Residues serine 75–arginine 91 are Cytoplasmic-facing. A helical transmembrane segment spans residues leucine 92 to isoleucine 112. The heme b site is built by histidine 93 and histidine 127. At serine 113–serine 128 the chain is on the lumenal side. The chain crosses the membrane as a helical span at residues tryptophan 129–leucine 149. The Cytoplasmic segment spans residues cysteine 150 to cysteine 169. A heme b-binding site is contributed by histidine 166. Residues glycine 170–phenylalanine 190 form a helical membrane-spanning segment. Over glutamine 191 to glutamine 193 the chain is Lumenal. The chain crosses the membrane as a helical span at residues isoleucine 194–methionine 214. Residues histidine 215 to isoleucine 229 lie on the Cytoplasmic side of the membrane.

Heme b is required as a cofactor.

It is found in the membrane. The catalysed reaction is monodehydro-L-ascorbate radical(out) + L-ascorbate(in) = monodehydro-L-ascorbate radical(in) + L-ascorbate(out). The enzyme catalyses Fe(3+)(out) + L-ascorbate(in) = monodehydro-L-ascorbate radical(in) + Fe(2+)(out) + H(+). Its function is as follows. Probable transmembrane reductase that may use ascorbate as an electron donor and transfer electrons across membranes to reduce monodehydro-L-ascorbate radical and iron cations Fe(3+) in another cellular compartment. This Mus musculus (Mouse) protein is Probable transmembrane reductase CYB561D1.